Here is a 333-residue protein sequence, read N- to C-terminus: D-alanine--D-alanine ligase (333 aa).

In terms of domain architecture, ATP-grasp spans 124–329 (KMWFSALGIP…FTEYLYSNIK (206 aa)). An ATP-binding site is contributed by 154 to 209 (ALETWGSVFIKAASQGSSVGCYRVDSIDELASSLKEAFSYSPYVVVEKTIHARELE). The Mg(2+) site is built by Asp283, Glu296, and Asn298.

The protein belongs to the D-alanine--D-alanine ligase family. Mg(2+) is required as a cofactor. Mn(2+) serves as cofactor.

The protein resides in the cytoplasm. The enzyme catalyses 2 D-alanine + ATP = D-alanyl-D-alanine + ADP + phosphate + H(+). It participates in cell wall biogenesis; peptidoglycan biosynthesis. Its function is as follows. Cell wall formation. This chain is D-alanine--D-alanine ligase, found in Shewanella sediminis (strain HAW-EB3).